We begin with the raw amino-acid sequence, 130 residues long: MAQAQYAGTGRRKNAVARVRLVPGTGKITVNKKDVEEYIPHADLRLIINQPFAVTSTEGSYDVFVNVVGGGYAGQSGAIRHGIARALLQVDPDFRDSLKRAGLLTRDARMVERKKPGLKKARKASQFSKR.

This sequence belongs to the universal ribosomal protein uS9 family.

The chain is Small ribosomal subunit protein uS9 from Streptococcus equi subsp. zooepidemicus (strain H70).